Consider the following 610-residue polypeptide: Elongation factor 4 (610 aa).

The region spanning 15–197 (KSIRNFSIIA…RIINDIPYPK (183 aa)) is the tr-type G domain. GTP contacts are provided by residues 27–32 (DHGKST) and 144–147 (NKID).

It belongs to the TRAFAC class translation factor GTPase superfamily. Classic translation factor GTPase family. LepA subfamily.

Its subcellular location is the cell membrane. The enzyme catalyses GTP + H2O = GDP + phosphate + H(+). Functionally, required for accurate and efficient protein synthesis under certain stress conditions. May act as a fidelity factor of the translation reaction, by catalyzing a one-codon backward translocation of tRNAs on improperly translocated ribosomes. Back-translocation proceeds from a post-translocation (POST) complex to a pre-translocation (PRE) complex, thus giving elongation factor G a second chance to translocate the tRNAs correctly. Binds to ribosomes in a GTP-dependent manner. The protein is Elongation factor 4 of Buchnera aphidicola subsp. Acyrthosiphon pisum (strain APS) (Acyrthosiphon pisum symbiotic bacterium).